The chain runs to 366 residues: D-alanine--D-alanine ligase (366 aa).

The 207-residue stretch at 140-346 (KALFAQSDLP…YGELLSRLVD (207 aa)) folds into the ATP-grasp domain. Residue 173–228 (EDRLGYPCFVKPANMGSSVGISKATNRAELVAAFDDAVRYDRKLIVEKGINVREIE) coordinates ATP. The Mg(2+) site is built by D299, E313, and N315.

It belongs to the D-alanine--D-alanine ligase family. Requires Mg(2+) as cofactor. Mn(2+) is required as a cofactor.

Its subcellular location is the cytoplasm. The enzyme catalyses 2 D-alanine + ATP = D-alanyl-D-alanine + ADP + phosphate + H(+). The protein operates within cell wall biogenesis; peptidoglycan biosynthesis. Cell wall formation. This chain is D-alanine--D-alanine ligase, found in Heliobacterium modesticaldum (strain ATCC 51547 / Ice1).